Reading from the N-terminus, the 483-residue chain is uncharacterized protein (483 aa).

Positions 11–71 constitute a TRAM domain; sequence RYRKGDIIEL…SRYLEARAIE (61 aa). [4Fe-4S] cluster is bound by residues cysteine 84, cysteine 90, cysteine 93, and cysteine 187. The S-adenosyl-L-methionine site is built by glutamine 312, tyrosine 341, glutamate 362, and aspartate 412. Cysteine 439 (nucleophile) is an active-site residue.

It belongs to the class I-like SAM-binding methyltransferase superfamily. RNA M5U methyltransferase family.

This is an uncharacterized protein from Chlorobaculum tepidum (strain ATCC 49652 / DSM 12025 / NBRC 103806 / TLS) (Chlorobium tepidum).